The sequence spans 940 residues: Beta-mannosidase A (940 aa).

Positions 1–21 (MHFHGIATQAVLASNITTGSG) are cleaved as a signal peptide. N-linked (GlcNAc...) asparagine glycosylation is found at asparagine 15, asparagine 39, asparagine 79, asparagine 245, asparagine 314, asparagine 321, and asparagine 344. Catalysis depends on glutamate 476, which acts as the Proton donor. Asparagine 534, asparagine 605, asparagine 626, asparagine 653, asparagine 733, asparagine 761, and asparagine 785 each carry an N-linked (GlcNAc...) asparagine glycan.

It belongs to the glycosyl hydrolase 2 family. Beta-mannosidase A subfamily. In terms of assembly, homodimer.

The protein localises to the secreted. The catalysed reaction is Hydrolysis of terminal, non-reducing beta-D-mannose residues in beta-D-mannosides.. It functions in the pathway glycan metabolism; N-glycan degradation. In terms of biological role, exoglycosidase that cleaves the single beta-linked mannose residue from the non-reducing end of beta-mannosidic oligosaccharides of various complexity and length. Involved in the degradation of polymeric mannan and galactomannan. In Emericella nidulans (strain FGSC A4 / ATCC 38163 / CBS 112.46 / NRRL 194 / M139) (Aspergillus nidulans), this protein is Beta-mannosidase A (mndA).